The following is a 263-amino-acid chain: HTH-type transcriptional repressor NanR (263 aa).

A disordered region spans residues 1–22; sequence MGLMNAFDSQTEDSSPAIGRNL. One can recognise an HTH gntR-type domain in the interval 30–98; that stretch reads KKLSEMVEEE…NGERARVSRP (69 aa). Positions 58–77 form a DNA-binding region, H-T-H motif; the sequence is ERELMAFFNVGRPSVREALA.

This sequence belongs to the NanR family.

Transcriptional repressor that controls expression of the genes required for the catabolism of sialic acids. The chain is HTH-type transcriptional repressor NanR from Escherichia coli (strain 55989 / EAEC).